A 1213-amino-acid polypeptide reads, in one-letter code: DNA-directed RNA polymerase subunit beta' (1213 aa).

Zn(2+) is bound by residues Cys60, Cys62, Cys75, and Cys78. Residues Asp450, Asp452, and Asp454 each contribute to the Mg(2+) site. Residues Cys819, Cys893, Cys900, and Cys903 each coordinate Zn(2+).

This sequence belongs to the RNA polymerase beta' chain family. The RNAP catalytic core consists of 2 alpha, 1 beta, 1 beta' and 1 omega subunit. When a sigma factor is associated with the core the holoenzyme is formed, which can initiate transcription. Mg(2+) serves as cofactor. Zn(2+) is required as a cofactor.

It carries out the reaction RNA(n) + a ribonucleoside 5'-triphosphate = RNA(n+1) + diphosphate. Functionally, DNA-dependent RNA polymerase catalyzes the transcription of DNA into RNA using the four ribonucleoside triphosphates as substrates. This Streptococcus pyogenes serotype M4 (strain MGAS10750) protein is DNA-directed RNA polymerase subunit beta'.